The primary structure comprises 490 residues: Cheilanthifoline synthase (490 aa).

Residues 2-22 (EESLWVVTATVVVVFAIAKLL) traverse the membrane as a helical segment. A heme-binding site is contributed by Cys432.

It belongs to the cytochrome P450 family. It depends on heme as a cofactor. As to expression, expressed in roots. Detected in leaves and stems.

It is found in the endoplasmic reticulum membrane. The enzyme catalyses (S)-scoulerine + reduced [NADPH--hemoprotein reductase] + O2 = (S)-cheilanthifoline + oxidized [NADPH--hemoprotein reductase] + 2 H2O + H(+). The protein operates within alkaloid biosynthesis. Methylenedioxy bridge-forming cytochrome P450 involved in the biosynthesis of isoquinoline alkaloids. Converts (S)-scoulerine into (R,S)-cheilanthifoline. Catalyzes an oxidative reaction that does not incorporate oxygen into the product. This chain is Cheilanthifoline synthase (CYP719A5), found in Eschscholzia californica (California poppy).